The primary structure comprises 973 residues: DNA repair protein rhp26 (973 aa).

Positions 35–107 (ESREIEKKRL…DIKRRLNNED (73 aa)) form a coiled coil. A disordered region spans residues 230-251 (RDQASASENNKDRGEFEGKDEW). A compositionally biased stretch (basic and acidic residues) spans 238–251 (NNKDRGEFEGKDEW). The Helicase ATP-binding domain maps to 289–490 (WELYCQEAGG…WNLFDFVFPG (202 aa)). 302-309 (DEMGLGKT) serves as a coordination point for ATP. Positions 367–386 (SREKRQYESDASESEAEESK) are disordered. The short motif at 441–444 (DEGH) is the DEAH box element. One can recognise a Helicase C-terminal domain in the interval 629 to 789 (VIRALLTLWK…RRFFKMTDLH (161 aa)). 3 disordered regions span residues 803 to 846 (ETGS…KGKK), 863 to 882 (KYKP…STLG), and 930 to 973 (AVSS…KQRR). The segment covering 834–846 (DRKKHKIHDKGKK) has biased composition (basic residues). Polar residues-rich tracts occupy residues 868-882 (QESN…STLG) and 947-965 (STNV…SSTL).

It is found in the cytoplasm. Its subcellular location is the nucleus. Functionally, involved in transcription-coupled repair (TCR). In Schizosaccharomyces pombe (strain 972 / ATCC 24843) (Fission yeast), this protein is DNA repair protein rhp26 (rhp26).